The following is an 89-amino-acid chain: Small ribosomal subunit protein uS17 (89 aa).

It belongs to the universal ribosomal protein uS17 family. In terms of assembly, part of the 30S ribosomal subunit.

Its function is as follows. One of the primary rRNA binding proteins, it binds specifically to the 5'-end of 16S ribosomal RNA. This is Small ribosomal subunit protein uS17 from Chlorobium chlorochromatii (strain CaD3).